Consider the following 267-residue polypeptide: Undecaprenyl-diphosphatase (267 aa).

8 helical membrane-spanning segments follow: residues 5-25 (TIVAAALGLLEGLTEFIPVSS), 45-65 (FEVLIQLGAIMAILGVYAGRL), 82-102 (ILAVLLAFLPAVVIGVLAHRI), 108-128 (FETPTLIAVMLIVGGVVLLFV), 143-163 (FPLPMALKIGFIQCLAMIPGV), 183-203 (AAEFSFFLSMPTMLGAFVYDL), 213-233 (AATGNIVIGFVCAFLAAVVVV), and 243-263 (YGYGLFAWWRIAVGVAVLLAL).

This sequence belongs to the UppP family.

Its subcellular location is the cell inner membrane. It catalyses the reaction di-trans,octa-cis-undecaprenyl diphosphate + H2O = di-trans,octa-cis-undecaprenyl phosphate + phosphate + H(+). Functionally, catalyzes the dephosphorylation of undecaprenyl diphosphate (UPP). Confers resistance to bacitracin. The protein is Undecaprenyl-diphosphatase of Paracoccus denitrificans (strain Pd 1222).